The chain runs to 248 residues: MDTRKRGRPEAGSFNSNGGGYKKSKQEMESYSTGLGSKSKPCTKFFSTSGCPFGENCHFLHYVPGGYNAVSQMTNMGPPIPQVSRNMQGSGNGGRFSGRGESGPGHVSNFGDSATARFSVDASLAGAIIGKGGVSSKQICRQTGVKLSIQDHERDPNLKNIVLEGTLEQISEASAMVKDLIGRLNSAAKKPPGGGLGGGGGMGSEGKPHPGSNFKTKICERFSKGNCTFGDRCHFAHGEAELRKSGIV.

Disordered regions lie at residues 1–37 and 87–110; these read MDTR…GLGS and MQGS…VSNF. The segment at 36-64 adopts a C3H1-type 1 zinc-finger fold; it reads GSKSKPCTKFFSTSGCPFGENCHFLHYVP. The span at 90–103 shows a compositional bias: gly residues; it reads SGNGGRFSGRGESG. The region spanning 113-177 is the KH domain; it reads SATARFSVDA…EQISEASAMV (65 aa). Positions 188–209 are disordered; that stretch reads AKKPPGGGLGGGGGMGSEGKPH. Residues 192–204 show a composition bias toward gly residues; sequence PGGGLGGGGGMGS. The segment at 213–240 adopts a C3H1-type 2 zinc-finger fold; sequence NFKTKICERFSKGNCTFGDRCHFAHGEA.

This Arabidopsis thaliana (Mouse-ear cress) protein is Zinc finger CCCH domain-containing protein 36.